The following is a 431-amino-acid chain: Gamma-glutamyl phosphate reductase (431 aa).

Belongs to the gamma-glutamyl phosphate reductase family.

The protein resides in the cytoplasm. It catalyses the reaction L-glutamate 5-semialdehyde + phosphate + NADP(+) = L-glutamyl 5-phosphate + NADPH + H(+). It functions in the pathway amino-acid biosynthesis; L-proline biosynthesis; L-glutamate 5-semialdehyde from L-glutamate: step 2/2. Catalyzes the NADPH-dependent reduction of L-glutamate 5-phosphate into L-glutamate 5-semialdehyde and phosphate. The product spontaneously undergoes cyclization to form 1-pyrroline-5-carboxylate. The sequence is that of Gamma-glutamyl phosphate reductase from Methylobacterium sp. (strain 4-46).